Consider the following 163-residue polypeptide: Phospholipase A2 homolog 3 (163 aa).

The signal sequence occupies residues 1 to 43; that stretch reads MARGGSFSRLRLRAGVVVAAAAAALLLFAVVAPPAAALNIGLQ. 6 cysteine pairs are disulfide-bonded: C55–C83, C59–C89, C64–C137, C76–C96, C95–C121, and C102–C114. Ca(2+) is bound by residues Y75, G77, and Y80. H99 is an active-site residue. D100 is a Ca(2+) binding site.

The protein belongs to the phospholipase A2 family. The cofactor is Ca(2+).

The protein localises to the secreted. The catalysed reaction is a 1,2-diacyl-sn-glycero-3-phosphocholine + H2O = a 1-acyl-sn-glycero-3-phosphocholine + a fatty acid + H(+). Its activity is regulated as follows. Inhibited by EGTA. Functionally, PA2 catalyzes the calcium-dependent hydrolysis of the 2-acyl groups in 3-sn-phosphoglycerides. Releases lysophospholipids (LPLs) and free fatty acids (FFAs) from membrane phospholipids in response to hormones and other external stimuli. The polypeptide is Phospholipase A2 homolog 3 (PLA2-III) (Oryza sativa subsp. japonica (Rice)).